A 718-amino-acid polypeptide reads, in one-letter code: MNLKPTILLFTILFLKCATFEVNEETERIVEDAVMRALDSRASENSESEQTSQHIIVSQQANSDSKSAQFTGEVLEEATRILVREFGLEILPAANEVIERWRNEEEELLQSSETTTTTEHPDPTRSKRSAIFRSKRQANRRCSSPPINCNNRFHTSIRSITGLCNNRQNSDLGNSVSPLRRILGAASYADGLGRIRTRSVNGGELPSARLISNRIHDDRNNQVFSPSINHLHMIIGQFIAHDVVFMPSSVARDGGALDCSACNSPQRVSPNCAPITIPRNDPYFNTPCMRLTRALNGQENFGVRSQIGQNSHFLDLSPVYGSADCEAETVRSFQEGKMLTFDDLGYTLPPQNANDSNCQSSAPFHCFTCGDFRNSLHPALIPVHTILIKEHNRLAEQVRVARPRFNDEQIFQLVRKIMIGMWQHIVYNEYIPKYLPRRTIRNFALRPLRNGVHRGYSTSVDPSISAEFAGAAFRFGHSQSRFDFPRLTENGRPAGNYDLGNDIFYADQMYLTRIGGWEPVMNGMVRMPAMKSDRYFSFGIRNQMFEIRGRNGSGVDLVSINIQRGRDMGLFPYIQYRQLVGLPTVTSFNELNTTFSQENIQALRNVYSDPADIDLYVGIMLEEPLSGGQLGPTASFMIGEQFRALKRGDRFFYESIAEGTDNFTQEEISELRNKTSLAKIICTNMDFAARINTDIFDHRSRQVACTSLPQLDIDRFLR.

A signal peptide spans 1-19 (MNLKPTILLFTILFLKCAT). The propeptide occupies 20-146 (FEVNEETERI…QANRRCSSPP (127 aa)). 2 disordered regions span residues 41 to 64 (RASE…ANSD) and 108 to 144 (LLQS…RCSS). Over residues 45 to 64 (NSESEQTSQHIIVSQQANSD) the composition is skewed to polar residues. Over residues 109–118 (LQSSETTTTT) the composition is skewed to low complexity. Residues 126–139 (SKRSAIFRSKRQAN) are compositionally biased toward basic residues. An intrachain disulfide couples cysteine 149 to cysteine 164. Histidine 241 serves as the catalytic Proton acceptor. Aspartate 242 lines the Ca(2+) pocket. Cysteine 262 and cysteine 272 form a disulfide bridge. Ca(2+) is bound by residues serine 311, phenylalanine 313, aspartate 315, and serine 317. Asparagine 354 carries N-linked (GlcNAc...) asparagine glycosylation. A disulfide bond links cysteine 358 and cysteine 366. Histidine 477 is a heme b binding site. N-linked (GlcNAc...) asparagine glycosylation is found at asparagine 551, asparagine 592, asparagine 662, and asparagine 673. A disulfide bridge links cysteine 682 with cysteine 705.

It belongs to the peroxidase family. Requires heme b as cofactor. Expressed in the hypodermis and gland cells of the pharynx. Specifically, there is low and transient expression from the distal bulb of the pharynx to the anterior of the buccal cavity. Whole body expression levels increase upon entry into the dauer phase.

The protein resides in the secreted. It carries out the reaction 2 a phenolic donor + H2O2 = 2 a phenolic radical donor + 2 H2O. Peroxidase which is involved in maintaining the cuticle integrity in the hypodermis and pharynx. It thus plays a role in conferring resistance against Gram-positive bacteria such as E.faecalis, S.aureus and C.diphtheriae, and yeast such as C.albicans. The sequence is that of Heme peroxidase 2 from Caenorhabditis elegans.